Here is a 459-residue protein sequence, read N- to C-terminus: Chromosomal replication initiator protein DnaA (459 aa).

Residues 1-90 (MAVSLWQQCI…RPASKPAAPA (90 aa)) form a domain I, interacts with DnaA modulators region. Positions 75 to 124 (RFDIGSRPASKPAAPAASTKSPVAPAAKSPSKPSFNSNEPAATANHRSNM) are disordered. A compositionally biased stretch (low complexity) spans 80–108 (SRPASKPAAPAASTKSPVAPAAKSPSKPS). Positions 91–122 (ASTKSPVAPAAKSPSKPSFNSNEPAATANHRS) are domain II. The segment covering 109–124 (FNSNEPAATANHRSNM) has biased composition (polar residues). Positions 123-339 (NMNPTYQFDN…GALNRVIANA (217 aa)) are domain III, AAA+ region. Residues glycine 167, glycine 169, lysine 170, and threonine 171 each coordinate ATP. The domain IV, binds dsDNA stretch occupies residues 340-459 (NFTGRPITID…YANLIRTLSS (120 aa)).

Belongs to the DnaA family. As to quaternary structure, oligomerizes as a right-handed, spiral filament on DNA at oriC.

The protein resides in the cytoplasm. In terms of biological role, plays an essential role in the initiation and regulation of chromosomal replication. ATP-DnaA binds to the origin of replication (oriC) to initiate formation of the DNA replication initiation complex once per cell cycle. Binds the DnaA box (a 9 base pair repeat at the origin) and separates the double-stranded (ds)DNA. Forms a right-handed helical filament on oriC DNA; dsDNA binds to the exterior of the filament while single-stranded (ss)DNA is stabiized in the filament's interior. The ATP-DnaA-oriC complex binds and stabilizes one strand of the AT-rich DNA unwinding element (DUE), permitting loading of DNA polymerase. After initiation quickly degrades to an ADP-DnaA complex that is not apt for DNA replication. Binds acidic phospholipids. The chain is Chromosomal replication initiator protein DnaA from Shewanella loihica (strain ATCC BAA-1088 / PV-4).